Consider the following 178-residue polypeptide: Oligoribonuclease (178 aa).

Positions 7–168 (LIWIDLEMTG…DDIRESIAEL (162 aa)) constitute an Exonuclease domain. Residue Tyr-128 is part of the active site.

Belongs to the oligoribonuclease family.

It localises to the cytoplasm. 3'-to-5' exoribonuclease specific for small oligoribonucleotides. The sequence is that of Oligoribonuclease from Pseudomonas syringae pv. syringae (strain B728a).